The sequence spans 213 residues: Orotate phosphoribosyltransferase (213 aa).

5-phospho-alpha-D-ribose 1-diphosphate is bound at residue Lys26. An orotate-binding site is contributed by 34 to 35 (FF). 5-phospho-alpha-D-ribose 1-diphosphate-binding positions include 72 to 73 (YK), Arg99, Lys100, Lys103, His105, and 124 to 132 (DDVITAGTA). Orotate-binding residues include Thr128 and Arg156.

The protein belongs to the purine/pyrimidine phosphoribosyltransferase family. PyrE subfamily. Homodimer. Mg(2+) serves as cofactor.

It catalyses the reaction orotidine 5'-phosphate + diphosphate = orotate + 5-phospho-alpha-D-ribose 1-diphosphate. It functions in the pathway pyrimidine metabolism; UMP biosynthesis via de novo pathway; UMP from orotate: step 1/2. Catalyzes the transfer of a ribosyl phosphate group from 5-phosphoribose 1-diphosphate to orotate, leading to the formation of orotidine monophosphate (OMP). The protein is Orotate phosphoribosyltransferase of Escherichia coli O139:H28 (strain E24377A / ETEC).